Consider the following 111-residue polypeptide: 2Fe-2S ferredoxin (111 aa).

Residues proline 2–threonine 104 enclose the 2Fe-2S ferredoxin-type domain. Residues cysteine 42, cysteine 48, cysteine 51, and cysteine 87 each contribute to the [2Fe-2S] cluster site.

This sequence belongs to the adrenodoxin/putidaredoxin family. The cofactor is [2Fe-2S] cluster.

Ferredoxin are iron-sulfur proteins that transfer electrons in a wide variety of metabolic reactions. Although the function of this ferredoxin is unknown it is probable that it has a role as a cellular electron transfer protein. Involved in the in vivo assembly of the Fe-S clusters in a wide variety of iron-sulfur proteins. The chain is 2Fe-2S ferredoxin (fdx) from Escherichia coli O157:H7.